The chain runs to 707 residues: Ribosomal RNA large subunit methyltransferase K/L (707 aa).

Residues 44-155 (VIYNLCLWSR…NDILTVSFDL (112 aa)) form the THUMP domain.

The protein belongs to the methyltransferase superfamily. RlmKL family.

It is found in the cytoplasm. The enzyme catalyses guanosine(2445) in 23S rRNA + S-adenosyl-L-methionine = N(2)-methylguanosine(2445) in 23S rRNA + S-adenosyl-L-homocysteine + H(+). The catalysed reaction is guanosine(2069) in 23S rRNA + S-adenosyl-L-methionine = N(2)-methylguanosine(2069) in 23S rRNA + S-adenosyl-L-homocysteine + H(+). Specifically methylates the guanine in position 2445 (m2G2445) and the guanine in position 2069 (m7G2069) of 23S rRNA. The polypeptide is Ribosomal RNA large subunit methyltransferase K/L (Legionella pneumophila (strain Corby)).